We begin with the raw amino-acid sequence, 147 residues long: uncharacterized protein (147 aa).

4 consecutive transmembrane segments (helical) span residues 13-33, 45-65, 80-100, and 116-136; these read LSLV…IIGL, LFVG…AYFL, YLFT…LILI, and WGFF…IIPY.

The protein resides in the cell membrane. This is an uncharacterized protein from Methanocaldococcus jannaschii (strain ATCC 43067 / DSM 2661 / JAL-1 / JCM 10045 / NBRC 100440) (Methanococcus jannaschii).